Reading from the N-terminus, the 394-residue chain is Elongation factor Tu 2 (394 aa).

The tr-type G domain occupies 10–204 (KPHVNVGTIG…ALDSYIPEPE (195 aa)). Residues 19-26 (GHVDHGKT) are G1. 19 to 26 (GHVDHGKT) serves as a coordination point for GTP. Position 26 (T26) interacts with Mg(2+). The tract at residues 60–64 (GITIS) is G2. Residues 81–84 (DCPG) form a G3 region. GTP contacts are provided by residues 81-85 (DCPGH) and 136-139 (NKCD). The tract at residues 136-139 (NKCD) is G4. The segment at 174–176 (SAL) is G5.

This sequence belongs to the TRAFAC class translation factor GTPase superfamily. Classic translation factor GTPase family. EF-Tu/EF-1A subfamily. As to quaternary structure, monomer.

Its subcellular location is the cytoplasm. The catalysed reaction is GTP + H2O = GDP + phosphate + H(+). Functionally, GTP hydrolase that promotes the GTP-dependent binding of aminoacyl-tRNA to the A-site of ribosomes during protein biosynthesis. In Photorhabdus laumondii subsp. laumondii (strain DSM 15139 / CIP 105565 / TT01) (Photorhabdus luminescens subsp. laumondii), this protein is Elongation factor Tu 2.